The chain runs to 92 residues: Small ribosomal subunit protein uS19c (92 aa).

The protein belongs to the universal ribosomal protein uS19 family.

It localises to the plastid. Its subcellular location is the chloroplast. Its function is as follows. Protein S19 forms a complex with S13 that binds strongly to the 16S ribosomal RNA. In Gossypium barbadense (Sea Island cotton), this protein is Small ribosomal subunit protein uS19c.